We begin with the raw amino-acid sequence, 130 residues long: uncharacterized protein (130 aa).

The N-terminal stretch at 1–19 is a signal peptide; sequence MKVLGNILWWAFVGFMAYA.

This is an uncharacterized protein from Escherichia coli (strain K12).